A 109-amino-acid polypeptide reads, in one-letter code: ATP-dependent Clp protease adapter protein ClpS (109 aa).

The segment at M1 to P23 is disordered.

The protein belongs to the ClpS family. As to quaternary structure, binds to the N-terminal domain of the chaperone ClpA.

Involved in the modulation of the specificity of the ClpAP-mediated ATP-dependent protein degradation. The chain is ATP-dependent Clp protease adapter protein ClpS from Maricaulis maris (strain MCS10) (Caulobacter maris).